We begin with the raw amino-acid sequence, 115 residues long: Phosphoribosyl-AMP cyclohydrolase (115 aa).

Asp-80 contacts Mg(2+). Position 81 (Cys-81) interacts with Zn(2+). The Mg(2+) site is built by Asp-82 and Asp-84. Zn(2+)-binding residues include Cys-97 and Cys-104.

Belongs to the PRA-CH family. Homodimer. The cofactor is Mg(2+). Requires Zn(2+) as cofactor.

Its subcellular location is the cytoplasm. The enzyme catalyses 1-(5-phospho-beta-D-ribosyl)-5'-AMP + H2O = 1-(5-phospho-beta-D-ribosyl)-5-[(5-phospho-beta-D-ribosylamino)methylideneamino]imidazole-4-carboxamide. It functions in the pathway amino-acid biosynthesis; L-histidine biosynthesis; L-histidine from 5-phospho-alpha-D-ribose 1-diphosphate: step 3/9. In terms of biological role, catalyzes the hydrolysis of the adenine ring of phosphoribosyl-AMP. This is Phosphoribosyl-AMP cyclohydrolase from Mycobacterium bovis (strain ATCC BAA-935 / AF2122/97).